The sequence spans 400 residues: Large envelope protein (400 aa).

M1 is subject to N-acetylmethionine. G2 carries the N-myristoyl glycine; by host lipid modification. Positions 2-119 (GAPLSTARRG…PPLRDTHPQA (118 aa)) are pre-S1. A pre-S region spans residues 2–174 (GAPLSTARRG…FSKTGDPAMN (173 aa)). Over 2–181 (GAPLSTARRG…AMNMENITSG (180 aa)) the chain is Virion surface; in external conformation. Residues 2–253 (GAPLSTARRG…PGYRWMCLRR (252 aa)) are Intravirion; in internal conformation-facing. An N-linked (GlcNAc...) asparagine glycan is attached at P4. Residues 70 to 115 (PHGGLLGWSPQAQGILTTSPPDPPPASTNRRSGRKPTPVSPPLRDT) form a disordered region. Residues 79 to 88 (PQAQGILTTS) are compositionally biased toward polar residues. Residues 120–174 (MQWNSTQFHQALLDPRVRGLYLPAGGSSSETQNPVPTIASLTSSIFSKTGDPAMN) form a pre-S2 region. The helical transmembrane segment at 182–202 (LLGPLLVLQAVCFLLTKILTI) threads the bilayer. Over 203 to 253 (PQSLDSWWTSLNFLGVPPGCPGQNSQSPISNHLPTSCPPTCPGYRWMCLRR) the chain is Intravirion; in external conformation. A helical transmembrane segment spans residues 254–274 (FIIFLFILLLCLIFLLVLLDY). Over 275-348 (QGMLPVCPLL…WASARFSWLS (74 aa)) the chain is Virion surface. An N-linked (GlcNAc...) asparagine; by host glycan is attached at N320. A helical membrane pass occupies residues 349–369 (LLVQFVQWCVGLSPTVWLLVI). At 370-375 (WMIWYW) the chain is on the intravirion side. Residues 376–398 (GPNLCSILSPFIPLLPIFCYLWA) form a helical membrane-spanning segment. Topologically, residues 399-400 (SI) are virion surface.

The protein belongs to the orthohepadnavirus major surface antigen family. In its internal form (Li-HBsAg), interacts with the capsid protein and with the isoform S. Interacts with host chaperone CANX. As to quaternary structure, associates with host chaperone CANX through its pre-S2 N glycan; this association may be essential for isoform M proper secretion. In terms of assembly, interacts with isoform L. Interacts with the antigens of satellite virus HDV (HDVAgs); this interaction is required for encapsidation of HDV genomic RNA. Isoform M is N-terminally acetylated by host at a ratio of 90%, and N-glycosylated by host at the pre-S2 region. Post-translationally, myristoylated.

The protein localises to the virion membrane. In terms of biological role, the large envelope protein exists in two topological conformations, one which is termed 'external' or Le-HBsAg and the other 'internal' or Li-HBsAg. In its external conformation the protein attaches the virus to cell receptors and thereby initiating infection. This interaction determines the species specificity and liver tropism. This attachment induces virion internalization predominantly through caveolin-mediated endocytosis. The large envelope protein also assures fusion between virion membrane and endosomal membrane. In its internal conformation the protein plays a role in virion morphogenesis and mediates the contact with the nucleocapsid like a matrix protein. The middle envelope protein plays an important role in the budding of the virion. It is involved in the induction of budding in a nucleocapsid independent way. In this process the majority of envelope proteins bud to form subviral lipoprotein particles of 22 nm of diameter that do not contain a nucleocapsid. This is Large envelope protein from Hepatitis B virus genotype H subtype adw4 (isolate Nicaragua/2928Nic/1997) (HBV-H).